The sequence spans 332 residues: Eukaryotic translation initiation factor 3 subunit I (332 aa).

4 WD repeats span residues 8–47 (GHERALTQVKYNGDGDIIFSVSKDHVDADSHNGERIGTYH), 48–87 (GHQGALWTVDVNPDSTLLATGGADNTLRLWEVQTGKLLHT), 144–182 (DESKATVAGFSYLAKYIISGHEDGSVTQWDGKTGELLSS), and 279–318 (GHFGPLNYVAVHPQGTGYCSGGEDGYVRVHHFDKPYFDFM).

It belongs to the eIF-3 subunit I family. As to quaternary structure, component of the eukaryotic translation initiation factor 3 (eIF-3) complex.

It is found in the cytoplasm. Component of the eukaryotic translation initiation factor 3 (eIF-3) complex, which is involved in protein synthesis of a specialized repertoire of mRNAs and, together with other initiation factors, stimulates binding of mRNA and methionyl-tRNAi to the 40S ribosome. The eIF-3 complex specifically targets and initiates translation of a subset of mRNAs involved in cell proliferation. In Phaeosphaeria nodorum (strain SN15 / ATCC MYA-4574 / FGSC 10173) (Glume blotch fungus), this protein is Eukaryotic translation initiation factor 3 subunit I.